The sequence spans 86 residues: Acyl-CoA-binding protein homolog (86 aa).

The ACB domain occupies 2–86 (VSEQFNAAAE…FVEGLVAKYA (85 aa)). Residues K14, 29 to 33 (YALFK), K51, K55, and Y74 contribute to the an acyl-CoA site.

Belongs to the ACBP family. Expressed in larval and pupal brains. In adults, expressed in cardia, part of the Malpighian tubules, fat body, and gametes of both sexes.

Binds medium- and long-chain acyl-CoA esters with very high affinity and may function as an intracellular carrier of acyl-CoA esters. May be involved in energy metabolism in a manner that depends on the substrate used for energy production. Dbi and its metabolites are involved in the regulation of multiple biological processes. In Drosophila melanogaster (Fruit fly), this protein is Acyl-CoA-binding protein homolog.